We begin with the raw amino-acid sequence, 261 residues long: Imidazole glycerol phosphate synthase subunit HisF (261 aa).

Residues aspartate 16 and aspartate 135 contribute to the active site.

The protein belongs to the HisA/HisF family. As to quaternary structure, heterodimer of HisH and HisF.

Its subcellular location is the cytoplasm. The enzyme catalyses 5-[(5-phospho-1-deoxy-D-ribulos-1-ylimino)methylamino]-1-(5-phospho-beta-D-ribosyl)imidazole-4-carboxamide + L-glutamine = D-erythro-1-(imidazol-4-yl)glycerol 3-phosphate + 5-amino-1-(5-phospho-beta-D-ribosyl)imidazole-4-carboxamide + L-glutamate + H(+). The protein operates within amino-acid biosynthesis; L-histidine biosynthesis; L-histidine from 5-phospho-alpha-D-ribose 1-diphosphate: step 5/9. In terms of biological role, IGPS catalyzes the conversion of PRFAR and glutamine to IGP, AICAR and glutamate. The HisF subunit catalyzes the cyclization activity that produces IGP and AICAR from PRFAR using the ammonia provided by the HisH subunit. The chain is Imidazole glycerol phosphate synthase subunit HisF from Mycobacterium leprae (strain Br4923).